A 155-amino-acid chain; its full sequence is Isotocin-neurophysin IT 1 (155 aa).

The signal sequence occupies residues 1 to 19 (MTGTAISVCLLFLLSVCSA). The cysteines at positions 20 and 25 are disulfide-linked. Position 28 is a glycine amide (glycine 28). 7 disulfide bridges follow: cysteine 41/cysteine 85, cysteine 44/cysteine 58, cysteine 52/cysteine 75, cysteine 59/cysteine 65, cysteine 92/cysteine 105, cysteine 99/cysteine 117, and cysteine 106/cysteine 111.

The protein belongs to the vasopressin/oxytocin family. In terms of processing, seven disulfide bonds are present in neurophysin.

Its function is as follows. Isotocin causes contraction of smooth muscles. This Takifugu rubripes (Japanese pufferfish) protein is Isotocin-neurophysin IT 1.